The chain runs to 385 residues: Probable splicing factor YJU2B (385 aa).

The interval 1 to 26 is disordered; it reads MGERKGQNKYYPPDFNPEKHGSLNRY. A Phosphoserine modification is found at S40. Residues 182–215 are a coiled coil; the sequence is LNSMLRRHFREKKKAMQEEEEKDQALQAKANLAI. The segment at 256-385 is disordered; the sequence is FPSAQGPSTS…VADYSDSESE (130 aa). Over residues 260–270 the composition is skewed to polar residues; that stretch reads QGPSTSSSKAS. S306 carries the phosphoserine modification. 2 stretches are compositionally biased toward polar residues: residues 307-316 and 359-373; these read PQCTADNSLS and GSSQ…TPNA.

The protein belongs to the CWC16 family.

The protein localises to the nucleus. May be involved in mRNA splicing. The chain is Probable splicing factor YJU2B from Rattus norvegicus (Rat).